Here is a 132-residue protein sequence, read N- to C-terminus: Small ribosomal subunit protein uS8 (132 aa).

The protein belongs to the universal ribosomal protein uS8 family. Part of the 30S ribosomal subunit. Contacts proteins S5 and S12.

Functionally, one of the primary rRNA binding proteins, it binds directly to 16S rRNA central domain where it helps coordinate assembly of the platform of the 30S subunit. The chain is Small ribosomal subunit protein uS8 from Rhodococcus jostii (strain RHA1).